Consider the following 237-residue polypeptide: Ribose-5-phosphate isomerase A (237 aa).

Substrate contacts are provided by residues serine 30–threonine 33, aspartate 87–aspartate 90, and lysine 100–glycine 103. Glutamate 109 serves as the catalytic Proton acceptor. Lysine 127 contacts substrate.

The protein belongs to the ribose 5-phosphate isomerase family. Homodimer.

The enzyme catalyses aldehydo-D-ribose 5-phosphate = D-ribulose 5-phosphate. It functions in the pathway carbohydrate degradation; pentose phosphate pathway; D-ribose 5-phosphate from D-ribulose 5-phosphate (non-oxidative stage): step 1/1. Functionally, catalyzes the reversible conversion of ribose-5-phosphate to ribulose 5-phosphate. The polypeptide is Ribose-5-phosphate isomerase A (Synechococcus sp. (strain RCC307)).